Here is a 123-residue protein sequence, read N- to C-terminus: Small ribosomal subunit protein uS12 (123 aa).

Residue Asp-89 is modified to 3-methylthioaspartic acid.

The protein belongs to the universal ribosomal protein uS12 family. As to quaternary structure, part of the 30S ribosomal subunit. Contacts proteins S8 and S17. May interact with IF1 in the 30S initiation complex.

Functionally, with S4 and S5 plays an important role in translational accuracy. In terms of biological role, interacts with and stabilizes bases of the 16S rRNA that are involved in tRNA selection in the A site and with the mRNA backbone. Located at the interface of the 30S and 50S subunits, it traverses the body of the 30S subunit contacting proteins on the other side and probably holding the rRNA structure together. The combined cluster of proteins S8, S12 and S17 appears to hold together the shoulder and platform of the 30S subunit. The sequence is that of Small ribosomal subunit protein uS12 from Brucella abortus (strain S19).